The sequence spans 257 residues: Glutamate racemase (257 aa).

Substrate-binding positions include 12–13 (DS) and 44–45 (YG). Catalysis depends on cysteine 75, which acts as the Proton donor/acceptor. 76–77 (NT) lines the substrate pocket. Cysteine 185 serves as the catalytic Proton donor/acceptor. Substrate is bound at residue 186 to 187 (TH).

It belongs to the aspartate/glutamate racemases family.

The enzyme catalyses L-glutamate = D-glutamate. It participates in cell wall biogenesis; peptidoglycan biosynthesis. Functionally, provides the (R)-glutamate required for cell wall biosynthesis. The sequence is that of Glutamate racemase from Clostridium botulinum (strain ATCC 19397 / Type A).